A 945-amino-acid polypeptide reads, in one-letter code: Glutamyl aminopeptidase (945 aa).

Topologically, residues 1-18 (MNFAEEEPSKKYCIKGKH) are cytoplasmic. A helical; Signal-anchor for type II membrane protein transmembrane segment spans residues 19–39 (VAIICGVVVAVGLIVGLSVGL). At 40–945 (TRSCEQDTTP…SIREWFASLP (906 aa)) the chain is on the extracellular side. The interval 43–77 (CEQDTTPAPSQPPPEASTALPPQDQNVCPDSEDES) is disordered. N-linked (GlcNAc...) asparagine glycosylation is found at asparagine 116 and asparagine 189. A substrate-binding site is contributed by glutamate 215. Asparagine 316 carries an N-linked (GlcNAc...) asparagine glycan. 349–353 (GAMEN) provides a ligand contact to substrate. Zn(2+) is bound at residue histidine 385. Residue glutamate 386 is the Proton acceptor of the active site. Zn(2+) is bound by residues histidine 389 and glutamate 408. Asparagine 546, asparagine 601, asparagine 637, asparagine 669, asparagine 754, and asparagine 792 each carry an N-linked (GlcNAc...) asparagine glycan. Arginine 878 is a substrate binding site.

It belongs to the peptidase M1 family. As to quaternary structure, homodimer; disulfide-linked. Zn(2+) serves as cofactor. In terms of tissue distribution, early B-lineage cells and certain stromal cell of hemopoietic tissues. Also expressed by capillary endothelial cells, placenta, and epithelial cells of the intestine and proximal renal tubules.

The protein resides in the cell membrane. It carries out the reaction Release of N-terminal glutamate (and to a lesser extent aspartate) from a peptide.. Substrate specificity is modulated by calcium which enhances the enzymatic activity for cleavage of acidic residues while reducing its activity with basic residues. Inhibited by aminopeptidase inhibitors amastatin and bestatin. Its function is as follows. Regulates central hypertension through its calcium-modulated preference to cleave N-terminal acidic residues from peptides such as angiotensin II. The chain is Glutamyl aminopeptidase (Enpep) from Mus musculus (Mouse).